Consider the following 148-residue polypeptide: Ribonuclease H (148 aa).

In terms of domain architecture, RNase H type-1 spans 1–143; that stretch reads MNQVVIYTDG…ADMLANKGVE (143 aa). D9, E47, D69, and D135 together coordinate Mg(2+).

The protein belongs to the RNase H family. In terms of assembly, monomer. Requires Mg(2+) as cofactor.

It is found in the cytoplasm. It catalyses the reaction Endonucleolytic cleavage to 5'-phosphomonoester.. In terms of biological role, endonuclease that specifically degrades the RNA of RNA-DNA hybrids. The protein is Ribonuclease H of Acidovorax sp. (strain JS42).